Here is a 157-residue protein sequence, read N- to C-terminus: Putative dehydration-responsive element-binding protein 2H (157 aa).

The Nuclear localization signal motif lies at 5–21 (RKSRGTRDVAEILRKWR). The disordered stretch occupies residues 29 to 57 (ADSCIDGGGSKPIRKAPPKRSRKGCMKGK). The segment covering 40–54 (PIRKAPPKRSRKGCM) has biased composition (basic residues). Residues 66–123 (DYTGVRQRTWGKWVAEIREPGRGAKLWLGTFSSSYEAALAYDEASKAIYGQSARLNLP) constitute a DNA-binding region (AP2/ERF).

Belongs to the AP2/ERF transcription factor family. ERF subfamily.

It localises to the nucleus. In terms of biological role, putative transcriptional activator that binds specifically to the DNA sequence 5'-[AG]CCGAC-3'. The chain is Putative dehydration-responsive element-binding protein 2H (DREB2H) from Arabidopsis thaliana (Mouse-ear cress).